The primary structure comprises 227 residues: Killer cell lectin-like receptor subfamily B member 1A (227 aa).

Residues 1–45 (MDTARVYFGLKPPRTPGAWHESPPSLPPDACRCPRSHRLALKLSC) lie on the Cytoplasmic side of the membrane. Positions 31 to 34 (CRCP) match the LCK-binding motif motif. The chain crosses the membrane as a helical; Signal-anchor for type II membrane protein span at residues 46–66 (AGLILLVVTLIGMSVLVRVLI). Residues 67 to 227 (QKPSIEKCYV…TLSNYVGYGH (161 aa)) lie on the Extracellular side of the membrane. Residues 93–212 (ECPQDWLSHR…NSDNRWICQK (120 aa)) form the C-type lectin domain. Disulfide bonds link cysteine 94-cysteine 105, cysteine 122-cysteine 210, and cysteine 189-cysteine 202.

Homodimer; disulfide-linked. Interacts with tyrosine kinase LCK. As to expression, expressed in natural killer cells.

The protein resides in the membrane. In terms of biological role, plays a stimulatory role on natural killer (NK) cell cytotoxicity. The polypeptide is Killer cell lectin-like receptor subfamily B member 1A (Klrb1a) (Mus musculus (Mouse)).